The chain runs to 431 residues: Leucine carboxyl methyltransferase 1 (431 aa).

S-adenosyl-L-methionine-binding positions include Arg-103, Gly-131, Asp-159, and 219-220; that span reads DL. The interval 228–268 is disordered; the sequence is QPQQPLPPGVPIGSRGLHASPFTPGSTTQHEEQTEETSLPQ. Glu-289 serves as a coordination point for S-adenosyl-L-methionine.

This sequence belongs to the methyltransferase superfamily. LCMT family.

The catalysed reaction is [phosphatase 2A protein]-C-terminal L-leucine + S-adenosyl-L-methionine = [phosphatase 2A protein]-C-terminal L-leucine methyl ester + S-adenosyl-L-homocysteine. Its function is as follows. Methylates the carboxyl group of the C-terminal leucine residue of protein phosphatase 2A catalytic subunits to form alpha-leucine ester residues. This chain is Leucine carboxyl methyltransferase 1 (ppm-1), found in Neurospora crassa (strain ATCC 24698 / 74-OR23-1A / CBS 708.71 / DSM 1257 / FGSC 987).